The following is a 379-amino-acid chain: Eukaryotic translation initiation factor 3 subunit M (379 aa).

In terms of domain architecture, PCI spans 179-341; the sequence is RSEEASKVMI…RKVIISSVAQ (163 aa).

This sequence belongs to the eIF-3 subunit M family. As to quaternary structure, component of the eukaryotic translation initiation factor 3 (eIF-3) complex.

The protein resides in the cytoplasm. Component of the eukaryotic translation initiation factor 3 (eIF-3) complex, which is involved in protein synthesis of a specialized repertoire of mRNAs and, together with other initiation factors, stimulates binding of mRNA and methionyl-tRNAi to the 40S ribosome. The eIF-3 complex specifically targets and initiates translation of a subset of mRNAs involved in cell proliferation. In Nematostella vectensis (Starlet sea anemone), this protein is Eukaryotic translation initiation factor 3 subunit M.